A 445-amino-acid chain; its full sequence is Tubulin beta-1 chain (445 aa).

GTP contacts are provided by Gln-11, Glu-69, Ser-138, Gly-142, Thr-143, Gly-144, Asn-204, and Asn-226. Mg(2+) is bound at residue Glu-69. The segment at 426–445 is disordered; sequence QDATAEDEEEYEDEEEEMAA. Over residues 429-445 the composition is skewed to acidic residues; sequence TAEDEEEYEDEEEEMAA.

This sequence belongs to the tubulin family. Dimer of alpha and beta chains. A typical microtubule is a hollow water-filled tube with an outer diameter of 25 nm and an inner diameter of 15 nM. Alpha-beta heterodimers associate head-to-tail to form protofilaments running lengthwise along the microtubule wall with the beta-tubulin subunit facing the microtubule plus end conferring a structural polarity. Microtubules usually have 13 protofilaments but different protofilament numbers can be found in some organisms and specialized cells. Requires Mg(2+) as cofactor.

It is found in the cytoplasm. The protein resides in the cytoskeleton. Tubulin is the major constituent of microtubules, a cylinder consisting of laterally associated linear protofilaments composed of alpha- and beta-tubulin heterodimers. Microtubules grow by the addition of GTP-tubulin dimers to the microtubule end, where a stabilizing cap forms. Below the cap, tubulin dimers are in GDP-bound state, owing to GTPase activity of alpha-tubulin. The protein is Tubulin beta-1 chain (TUBB1) of Eleusine indica (Goosegrass).